A 503-amino-acid polypeptide reads, in one-letter code: Cytochrome P450 714C1 (503 aa).

The Lumenal segment spans residues 1 to 6; sequence MEKLLA. A helical; Signal-anchor for type III membrane protein transmembrane segment spans residues 7–27; that stretch reads LIVVLVILLSLALFYLCNILW. At 28 to 503 the chain is on the cytoplasmic side; the sequence is LRAVKIRKKL…GLPLMVTKLP (476 aa). Position 450 (C450) interacts with heme.

It belongs to the cytochrome P450 family. Heme serves as cofactor.

The protein localises to the membrane. Functionally, probably not involved in gibberellin metabolism since over-expression of CYP714C1 in a heterologous system does not induce semi-dwarfism. The polypeptide is Cytochrome P450 714C1 (CYP714C1) (Oryza sativa subsp. japonica (Rice)).